A 322-amino-acid polypeptide reads, in one-letter code: Agmatinase (322 aa).

Mn(2+) contacts are provided by H136, D160, H162, D164, D243, and D245.

The protein belongs to the arginase family. Agmatinase subfamily. Mn(2+) is required as a cofactor.

It carries out the reaction agmatine + H2O = urea + putrescine. It participates in amine and polyamine biosynthesis; putrescine biosynthesis via agmatine pathway; putrescine from agmatine: step 1/1. Catalyzes the formation of putrescine from agmatine. The chain is Agmatinase from Chromobacterium violaceum (strain ATCC 12472 / DSM 30191 / JCM 1249 / CCUG 213 / NBRC 12614 / NCIMB 9131 / NCTC 9757 / MK).